Reading from the N-terminus, the 120-residue chain is Sirohydrochlorin cobaltochelatase (120 aa).

His9 acts as the Proton acceptor in catalysis. A Co(2+)-binding site is contributed by His9. Residues Gln43 and 68 to 73 contribute to the substrate site; that span reads FAAGTH. A Co(2+)-binding site is contributed by His73.

The protein belongs to the CbiX family. CbiXS subfamily. In terms of assembly, homotetramer; dimer of dimers.

It carries out the reaction Co-sirohydrochlorin + 2 H(+) = sirohydrochlorin + Co(2+). It participates in cofactor biosynthesis; adenosylcobalamin biosynthesis; cob(II)yrinate a,c-diamide from sirohydrochlorin (anaerobic route): step 1/10. Catalyzes the insertion of Co(2+) into sirohydrochlorin as part of the anaerobic pathway to cobalamin biosynthesis. The protein is Sirohydrochlorin cobaltochelatase of Sulfurisphaera tokodaii (strain DSM 16993 / JCM 10545 / NBRC 100140 / 7) (Sulfolobus tokodaii).